The chain runs to 163 residues: uncharacterized protein (163 aa).

This is an uncharacterized protein from Rickettsia conorii (strain ATCC VR-613 / Malish 7).